The primary structure comprises 84 residues: Acetylcholine receptor subunit alpha (84 aa).

Cystine bridges form between Cys7–Cys21 and Cys71–Cys72. N-linked (GlcNAc...) asparagine glycosylation occurs at Asn20.

This sequence belongs to the ligand-gated ion channel (TC 1.A.9) family. Acetylcholine receptor (TC 1.A.9.1) subfamily. Alpha-1/CHRNA1 sub-subfamily. As to quaternary structure, one of the alpha chains that assemble within the acetylcholine receptor, a pentamer of two alpha chains, a beta, a delta, and a gamma (in immature muscle) or epsilon (in mature muscle) chains. The muscle heteropentamer composed of alpha-1, beta-1, delta, epsilon subunits interacts with the alpha-conotoxin ImII.

It localises to the postsynaptic cell membrane. The protein resides in the cell membrane. The catalysed reaction is K(+)(in) = K(+)(out). The enzyme catalyses Na(+)(in) = Na(+)(out). In terms of biological role, upon acetylcholine binding, the AChR responds by an extensive change in conformation that affects all subunits and leads to opening of an ion-conducting channel across the plasma membrane. The chain is Acetylcholine receptor subunit alpha (CHRNA1) from Crocidura russula (Greater white-toothed shrew).